Consider the following 704-residue polypeptide: Methionine--tRNA ligase (704 aa).

Positions 17–27 (PYANGPIHLGH) match the 'HIGH' region motif. Residues Cys148, Cys151, Cys161, and Cys164 each coordinate Zn(2+). The short motif at 348 to 352 (KMSKS) is the 'KMSKS' region element. Lys351 contacts ATP. Residues 603–704 (ELSKVELRVG…KDAKPGDRLK (102 aa)) form the tRNA-binding domain.

It belongs to the class-I aminoacyl-tRNA synthetase family. MetG type 1 subfamily. As to quaternary structure, homodimer. Zn(2+) is required as a cofactor.

Its subcellular location is the cytoplasm. The enzyme catalyses tRNA(Met) + L-methionine + ATP = L-methionyl-tRNA(Met) + AMP + diphosphate. In terms of biological role, is required not only for elongation of protein synthesis but also for the initiation of all mRNA translation through initiator tRNA(fMet) aminoacylation. The polypeptide is Methionine--tRNA ligase (Leptospira borgpetersenii serovar Hardjo-bovis (strain L550)).